Here is a 156-residue protein sequence, read N- to C-terminus: Arginine repressor (156 aa).

The protein belongs to the ArgR family.

It localises to the cytoplasm. Its pathway is amino-acid biosynthesis; L-arginine biosynthesis [regulation]. Its function is as follows. Regulates arginine biosynthesis genes. The protein is Arginine repressor of Shewanella loihica (strain ATCC BAA-1088 / PV-4).